A 715-amino-acid polypeptide reads, in one-letter code: MGYQLSATLKGHDQDVRDVVAVDDSKVASVSRDGTVRLWSKDDQWLGTVVYTGQGFLNSVCYDSEKELLLFGGKDTMINGVPLFATSGEDPLYTLIGHQGNVCSLSFQDGVVISGSWDKTAKVWKEGSLVYNLQAHNASVWDAKVVSFSENKFLTASADKTIKLWQNDKVIKTFSGIHNDVVRHLAVVDDGHFISCSNDGLIKLVDMHTGDVLRTYEGHESFVYCIKLLPNGDIVSCGEDRTVRIWSKENGSLKQVITLPAISIWSVDCMSNGDIIVGSSDNLVRIFSQEKSRWASEDEINELSTQVEKSTISSKTIEFDESKLSPYEILQSPGRKEGQIVVVKSPQGTIEAHQFSNSSWKKVGDVVGAGATGNDKKIEFEGKTYDYVFDVDIEDGKPPLKLPINVSDNPYTAADNFLARYELPMSYRDQVVQFILKNTNGISLDQPNDNASSSAVSPSKTSVMKVLPVKQYLIMENYNPDTIFNGIVKINSNEKTFDDEILAQIGGALHDIDESWELLLSFANTIRSNWEIKTPAYDIVRLIVKKLPYSSDIKDYIEEGLGNKNITLTMLTVRILVNCFNNENWGVKLLESNQVYKSIFETIDTEFSQASAKQSQNLAIAVSTLIFNYSALVTKGNSDLELLPIVADAINTKYGPLEEYQECEEAAYRLTVAYGNLATVEPTLRQFANSVTWLANIKRSYGNVPRFKDIFDDLS.

WD repeat units lie at residues 11–40, 53–82, 97–125, 135–166, 177–206, 218–247, and 259–288; these read GHDQ…RLWS, GQGF…NGVP, GHQG…KVWK, AHNA…KLWQ, IHND…KLVD, GHES…RIWS, and LPAI…RIFS. S332 carries the phosphoserine modification. In terms of domain architecture, PFU spans 352 to 449; sequence AHQFSNSSWK…NGISLDQPND (98 aa). Residues 434-440 are interaction with HSE1; the sequence is FILKNTN. Positions 465-715 constitute a PUL domain; it reads KVLPVKQYLI…RFKDIFDDLS (251 aa). ARM repeat units lie at residues 478 to 512, 513 to 543, 544 to 582, 583 to 635, 636 to 680, and 681 to 715; these read YNPD…LHDI, DESW…VRLI, VKKL…CFNN, ENWG…LVTK, GNSD…LATV, and EPTL…DDLS.

The protein belongs to the WD repeat PLAP family. Forms a complex composed of CDC48, NPL4, UFD1, DOA1, SHP1 and deubiquitinase OTU1; within the complex interacts with CDC48. Interacts (via PUL domain) with CDC48 (via C-terminus); the interaction is direct. Forms a complex composed of CDC48, DOA1, deubiquitinase UBP3 and probably BRE5; within the complex interacts with CDC48 and UBP3. May form a complex composed of VPS27, HSE1 and DOA1. Interacts with HSE1 (via SH3 domain). Interacts (via WD repeats and PFU domain) with ubiquitin; the interaction is direct. Interacts with ubiquitinated FZO1 but not unmodified FZO1; the interaction recruits FZO1 to CDC48 and promotes FZO1 proteasomal degradation.

It is found in the nucleus. The protein resides in the cytoplasm. It localises to the mitochondrion outer membrane. Its subcellular location is the endosome membrane. Functionally, ubiquitin-binding protein involved in protein ubiquitination, sorting and degradation. Acts as a ubiquitinated substrate-recruiting adapter for chaperone ATPase CDC48 by binding mono- or polyubiquitin chains. Depending on the context, promotes or prevents proteasomal degradation of ubiquitinated proteins. Involved in the ubiquitin fusion degradation (UFD) pathway by promoting the degradation of ubiquitinated proteins. Involved in the mitochondria-associated degradation pathway (MAD) by promoting the degradation of several ubiquitinated membrane proteins. By competing with UFD2 to bind CDC48, prevents the multi-ubiquitination and subsequent degradation of UFD2-dependent substrates. Required for ribophagy, a process which relocalizes ribosomal particles into the vacuole for degradation in response to starvation. Involved in the ubiquitin-mediated sorting of membrane proteins into multivesicular bodies (MVBs). In addition, plays an essential role in maintaining cellular ubiquitin levels. May affect indirectly the degradation of ubiquitinylated proteins by regulating cellular ubiquitin levels. In Saccharomyces cerevisiae (strain ATCC 204508 / S288c) (Baker's yeast), this protein is Protein DOA1.